The chain runs to 634 residues: Chaperone protein HtpG (634 aa).

The interval 1–344 (MSETVSQNKE…SNDLPLNVSR (344 aa)) is a; substrate-binding. A b region spans residues 345–561 (EILQDNKVTQ…DYEMGTQMAK (217 aa)). Positions 562 to 634 (LLAAAGQAVP…GAINKLLTKV (73 aa)) are c.

It belongs to the heat shock protein 90 family. Homodimer.

The protein localises to the cytoplasm. In terms of biological role, molecular chaperone. Has ATPase activity. The sequence is that of Chaperone protein HtpG from Vibrio parahaemolyticus serotype O3:K6 (strain RIMD 2210633).